A 262-amino-acid polypeptide reads, in one-letter code: Small ribosomal subunit protein eS4B (262 aa).

The 64-residue stretch at 42 to 105 (LPLIVFLRNR…GEHFRLVYDI (64 aa)) folds into the S4 RNA-binding domain. Phosphoserine is present on Ser-223.

The protein belongs to the eukaryotic ribosomal protein eS4 family. As to quaternary structure, component of the small ribosomal subunit (SSU). Mature yeast ribosomes consist of a small (40S) and a large (60S) subunit. The 40S small subunit contains 1 molecule of ribosomal RNA (18S rRNA) and at least 33 different proteins. The large 60S subunit contains 3 rRNA molecules (25S, 5.8S and 5S rRNA) and at least 46 different proteins.

Its subcellular location is the cytoplasm. It localises to the nucleus. It is found in the nucleolus. Functionally, component of the ribosome, a large ribonucleoprotein complex responsible for the synthesis of proteins in the cell. The small ribosomal subunit (SSU) binds messenger RNAs (mRNAs) and translates the encoded message by selecting cognate aminoacyl-transfer RNA (tRNA) molecules. The large subunit (LSU) contains the ribosomal catalytic site termed the peptidyl transferase center (PTC), which catalyzes the formation of peptide bonds, thereby polymerizing the amino acids delivered by tRNAs into a polypeptide chain. The nascent polypeptides leave the ribosome through a tunnel in the LSU and interact with protein factors that function in enzymatic processing, targeting, and the membrane insertion of nascent chains at the exit of the ribosomal tunnel. The polypeptide is Small ribosomal subunit protein eS4B (rps402) (Schizosaccharomyces pombe (strain 972 / ATCC 24843) (Fission yeast)).